A 189-amino-acid polypeptide reads, in one-letter code: MSFSEQIQNLSLLLLEIGTIIGALGVVLLPNILYSGFLLGGVLICIAGIYLLLNAEFIAAAQVLIYVGAINVIILFAIMLVNKIENLNPSNNQMMRNGLSSFICFSFFILLSNMIFDTQWIDTVGVSTKYSISIIGNHIFSDFLLPFEIVSVLLLVTLVGAVFIARKEDASEIEISKISFLNLPDPSKK.

5 helical membrane-spanning segments follow: residues leucine 10 to proline 30, isoleucine 32 to leucine 52, alanine 61 to valine 81, glycine 98 to threonine 118, and leucine 144 to isoleucine 164.

It belongs to the complex I subunit 6 family. In terms of assembly, NDH is composed of at least 16 different subunits, 5 of which are encoded in the nucleus.

It localises to the plastid. Its subcellular location is the chloroplast thylakoid membrane. The enzyme catalyses a plastoquinone + NADH + (n+1) H(+)(in) = a plastoquinol + NAD(+) + n H(+)(out). It carries out the reaction a plastoquinone + NADPH + (n+1) H(+)(in) = a plastoquinol + NADP(+) + n H(+)(out). Its function is as follows. NDH shuttles electrons from NAD(P)H:plastoquinone, via FMN and iron-sulfur (Fe-S) centers, to quinones in the photosynthetic chain and possibly in a chloroplast respiratory chain. The immediate electron acceptor for the enzyme in this species is believed to be plastoquinone. Couples the redox reaction to proton translocation, and thus conserves the redox energy in a proton gradient. This Mesostigma viride (Green alga) protein is NAD(P)H-quinone oxidoreductase subunit 6, chloroplastic (ndhG).